Consider the following 633-residue polypeptide: DNA mismatch repair protein MutL (633 aa).

This sequence belongs to the DNA mismatch repair MutL/HexB family.

In terms of biological role, this protein is involved in the repair of mismatches in DNA. It is required for dam-dependent methyl-directed DNA mismatch repair. May act as a 'molecular matchmaker', a protein that promotes the formation of a stable complex between two or more DNA-binding proteins in an ATP-dependent manner without itself being part of a final effector complex. This Pseudomonas putida (strain W619) protein is DNA mismatch repair protein MutL.